Here is a 217-residue protein sequence, read N- to C-terminus: Small ribosomal subunit protein uS3c (217 aa).

A KH type-2 domain is found at 47-118 (IQKHVKSVSN…NLRVTLTGVI (72 aa)).

This sequence belongs to the universal ribosomal protein uS3 family. As to quaternary structure, part of the 30S ribosomal subunit.

It is found in the plastid. It localises to the chloroplast. This Adiantum capillus-veneris (Maidenhair fern) protein is Small ribosomal subunit protein uS3c (rps3).